The primary structure comprises 591 residues: Indole-3-acetic acid-amido synthetase GH3.10 (591 aa).

It belongs to the IAA-amido conjugating enzyme family. As to expression, expressed in cotyledons and hypocotyls.

Its function is as follows. Catalyzes the synthesis of indole-3-acetic acid (IAA)-amino acid conjugates, providing a mechanism for the plant to cope with the presence of excess auxin. Involved in red light-specific hypocotyl elongation. May act downstream of a red light signal transduction and determine the degree of hypocotyl elongation. The chain is Indole-3-acetic acid-amido synthetase GH3.10 from Arabidopsis thaliana (Mouse-ear cress).